The sequence spans 433 residues: ATP-dependent protease ATPase subunit HslU (433 aa).

ATP-binding positions include Val18, 60–65 (GVGKTE), Asp246, Glu311, and Arg383.

This sequence belongs to the ClpX chaperone family. HslU subfamily. A double ring-shaped homohexamer of HslV is capped on each side by a ring-shaped HslU homohexamer. The assembly of the HslU/HslV complex is dependent on binding of ATP.

It localises to the cytoplasm. Its function is as follows. ATPase subunit of a proteasome-like degradation complex; this subunit has chaperone activity. The binding of ATP and its subsequent hydrolysis by HslU are essential for unfolding of protein substrates subsequently hydrolyzed by HslV. HslU recognizes the N-terminal part of its protein substrates and unfolds these before they are guided to HslV for hydrolysis. The sequence is that of ATP-dependent protease ATPase subunit HslU from Nitrobacter winogradskyi (strain ATCC 25391 / DSM 10237 / CIP 104748 / NCIMB 11846 / Nb-255).